Here is a 247-residue protein sequence, read N- to C-terminus: Small ribosomal subunit protein uS2 (247 aa).

This sequence belongs to the universal ribosomal protein uS2 family.

The chain is Small ribosomal subunit protein uS2 from Pseudomonas syringae pv. syringae (strain B728a).